Here is a 440-residue protein sequence, read N- to C-terminus: Asparagine--tRNA ligase (440 aa).

This sequence belongs to the class-II aminoacyl-tRNA synthetase family. As to quaternary structure, homodimer.

The protein localises to the cytoplasm. The catalysed reaction is tRNA(Asn) + L-asparagine + ATP = L-asparaginyl-tRNA(Asn) + AMP + diphosphate + H(+). The polypeptide is Asparagine--tRNA ligase (Roseiflexus sp. (strain RS-1)).